A 221-amino-acid polypeptide reads, in one-letter code: Glutathione S-transferase alpha-5 (221 aa).

Positions 3 to 83 constitute a GST N-terminal domain; it reads GKPVLHYFDG…YIATKYNLYG (81 aa). Lys4 carries the N6-succinyllysine modification. Residues Tyr9, Arg45, 54 to 55, and 67 to 68 each bind glutathione; these read QV and QT. One can recognise a GST C-terminal domain in the interval 85 to 207; sequence DMKERALIDM…LQPGSQRKPF (123 aa).

The protein belongs to the GST superfamily. Alpha family. In terms of assembly, heterodimer of YC1 and YC2. Liver, nasal mucosa and epididymis.

The protein resides in the cytoplasm. It carries out the reaction RX + glutathione = an S-substituted glutathione + a halide anion + H(+). Its function is as follows. Conjugation of reduced glutathione to a wide number of exogenous and endogenous hydrophobic electrophiles. Has substantial activity toward aflatoxin B1-8,9-epoxide. The polypeptide is Glutathione S-transferase alpha-5 (Gsta5) (Rattus norvegicus (Rat)).